Here is a 186-residue protein sequence, read N- to C-terminus: UPF0301 protein Sfri_2850 (186 aa).

Belongs to the UPF0301 (AlgH) family.

This chain is UPF0301 protein Sfri_2850, found in Shewanella frigidimarina (strain NCIMB 400).